We begin with the raw amino-acid sequence, 93 residues long: Cytochrome c (93 aa).

Low complexity predominate over residues 1–13 (AALPPGDAAAAQG). Residues 1-21 (AALPPGDAAAAQGGSNGVGPN) form a disordered region. Met70 is a binding site for heme c.

Belongs to the cytochrome c family. Binds 1 heme c group covalently per subunit.

Its subcellular location is the mitochondrion intermembrane space. Electron carrier protein. The oxidized form of the cytochrome c heme group can accept an electron from the heme group of the cytochrome c1 subunit of cytochrome reductase. Cytochrome c then transfers this electron to the cytochrome oxidase complex, the final protein carrier in the mitochondrial electron-transport chain. In Trypanosoma brucei brucei, this protein is Cytochrome c.